We begin with the raw amino-acid sequence, 205 residues long: Thiamine-phosphate synthase (205 aa).

Residues 34 to 38 (QLRCK) and Asn-66 contribute to the 4-amino-2-methyl-5-(diphosphooxymethyl)pyrimidine site. Mg(2+) contacts are provided by Asp-67 and Asp-86. Ser-105 lines the 4-amino-2-methyl-5-(diphosphooxymethyl)pyrimidine pocket. Residue 131 to 133 (TTT) participates in 2-[(2R,5Z)-2-carboxy-4-methylthiazol-5(2H)-ylidene]ethyl phosphate binding. Lys-134 contacts 4-amino-2-methyl-5-(diphosphooxymethyl)pyrimidine. Residue Gly-163 participates in 2-[(2R,5Z)-2-carboxy-4-methylthiazol-5(2H)-ylidene]ethyl phosphate binding.

It belongs to the thiamine-phosphate synthase family. Requires Mg(2+) as cofactor.

It catalyses the reaction 2-[(2R,5Z)-2-carboxy-4-methylthiazol-5(2H)-ylidene]ethyl phosphate + 4-amino-2-methyl-5-(diphosphooxymethyl)pyrimidine + 2 H(+) = thiamine phosphate + CO2 + diphosphate. The catalysed reaction is 2-(2-carboxy-4-methylthiazol-5-yl)ethyl phosphate + 4-amino-2-methyl-5-(diphosphooxymethyl)pyrimidine + 2 H(+) = thiamine phosphate + CO2 + diphosphate. It carries out the reaction 4-methyl-5-(2-phosphooxyethyl)-thiazole + 4-amino-2-methyl-5-(diphosphooxymethyl)pyrimidine + H(+) = thiamine phosphate + diphosphate. The protein operates within cofactor biosynthesis; thiamine diphosphate biosynthesis; thiamine phosphate from 4-amino-2-methyl-5-diphosphomethylpyrimidine and 4-methyl-5-(2-phosphoethyl)-thiazole: step 1/1. In terms of biological role, condenses 4-methyl-5-(beta-hydroxyethyl)thiazole monophosphate (THZ-P) and 2-methyl-4-amino-5-hydroxymethyl pyrimidine pyrophosphate (HMP-PP) to form thiamine monophosphate (TMP). This is Thiamine-phosphate synthase from Neisseria meningitidis serogroup A / serotype 4A (strain DSM 15465 / Z2491).